The following is a 124-amino-acid chain: Small ribosomal subunit protein uS12cz/uS12cy (124 aa).

The protein belongs to the universal ribosomal protein uS12 family. Part of the 30S ribosomal subunit.

The protein resides in the plastid. Its function is as follows. With S4 and S5 plays an important role in translational accuracy. Located at the interface of the 30S and 50S subunits. The sequence is that of Small ribosomal subunit protein uS12cz/uS12cy (rps12-A) from Epifagus virginiana (Beechdrops).